A 67-amino-acid polypeptide reads, in one-letter code: Large ribosomal subunit protein bL35 (67 aa).

Belongs to the bacterial ribosomal protein bL35 family.

The sequence is that of Large ribosomal subunit protein bL35 from Rhizobium johnstonii (strain DSM 114642 / LMG 32736 / 3841) (Rhizobium leguminosarum bv. viciae).